The chain runs to 93 residues: OMEGA-ectatommitoxin(02)-Rm1c (93 aa).

Positions Met1 to Gly30 are cleaved as a signal peptide. 3 cysteine pairs are disulfide-bonded: Cys39-Cys52, Cys47-Cys68, and Cys70-Cys79. An EGF-like domain is found at Tyr43–Gly80.

Belongs to the EGF domain peptide family. As to expression, expressed by the venom gland.

Its subcellular location is the secreted. Ant peptide with probable defensive activity which acts as a potent agonist of the mammalian epidermal growth factor receptor (EGFR). Mimics, both structurally and functionally, vertebrate epidermal growth factor (EGF) peptide hormones. In vivo, intraplantar injection in mice causes long-lasting (several days) hypersensitivity of the injected paw to both mechanical and thermal stimuli. Its long-lasting effect is unusual for venom toxins whose effects are usually immediate. One possible explanation is that it would reduce the duration of a nest attack, discourage future attacks, or enhance the actions of subsequent exposure to other pain-inducing venom peptides. This is OMEGA-ectatommitoxin(02)-Rm1c from Rhytidoponera metallica (Australian green-headed ant).